The following is a 623-amino-acid chain: Fanconi anemia group G protein homolog (623 aa).

TPR repeat units lie at residues 251–284 (VQVY…GTTC), 349–382 (SQAK…LLGG), 458–491 (SATH…LFRT), and 517–550 (VAAL…CPGN).

Belongs to the multisubunit FA complex composed of FANCA, FANCB, FANCC, FANCE, FANCF, FANCG, FANCL/PHF9 and FANCM. In complex with FANCF, FANCA and FANCL, but not with FANCC, nor FANCE, interacts with HES1; this interaction may be essential for the stability and nuclear localization of FA core complex proteins. The complex with FANCC and FANCG may also include EIF2AK2 and HSP70. As to expression, highest expression levels in spleen, thymus and testis.

The protein localises to the nucleus. In terms of biological role, DNA repair protein that may operate in a postreplication repair or a cell cycle checkpoint function. May be implicated in interstrand DNA cross-link repair and in the maintenance of normal chromosome stability. Candidate tumor suppressor gene. The protein is Fanconi anemia group G protein homolog (Fancg) of Mus musculus (Mouse).